A 159-amino-acid polypeptide reads, in one-letter code: SsrA-binding protein (159 aa).

Over residues 131 to 148 the composition is skewed to basic and acidic residues; sequence YDKRQTLREKQDRREAER. Positions 131–159 are disordered; the sequence is YDKRQTLREKQDRREAERTISAIKRKQRA.

Belongs to the SmpB family.

It localises to the cytoplasm. Its function is as follows. Required for rescue of stalled ribosomes mediated by trans-translation. Binds to transfer-messenger RNA (tmRNA), required for stable association of tmRNA with ribosomes. tmRNA and SmpB together mimic tRNA shape, replacing the anticodon stem-loop with SmpB. tmRNA is encoded by the ssrA gene; the 2 termini fold to resemble tRNA(Ala) and it encodes a 'tag peptide', a short internal open reading frame. During trans-translation Ala-aminoacylated tmRNA acts like a tRNA, entering the A-site of stalled ribosomes, displacing the stalled mRNA. The ribosome then switches to translate the ORF on the tmRNA; the nascent peptide is terminated with the 'tag peptide' encoded by the tmRNA and targeted for degradation. The ribosome is freed to recommence translation, which seems to be the essential function of trans-translation. The sequence is that of SsrA-binding protein from Streptomyces coelicolor (strain ATCC BAA-471 / A3(2) / M145).